A 204-amino-acid polypeptide reads, in one-letter code: Large ribosomal subunit protein uL3 (204 aa).

The protein belongs to the universal ribosomal protein uL3 family. As to quaternary structure, part of the 50S ribosomal subunit. Forms a cluster with proteins L14 and L19.

One of the primary rRNA binding proteins, it binds directly near the 3'-end of the 23S rRNA, where it nucleates assembly of the 50S subunit. The protein is Large ribosomal subunit protein uL3 of Azobacteroides pseudotrichonymphae genomovar. CFP2.